The chain runs to 419 residues: Acetylornithine aminotransferase (419 aa).

Pyridoxal 5'-phosphate-binding positions include 116–117 and phenylalanine 149; that span reads GA. Arginine 152 is a N(2)-acetyl-L-ornithine binding site. Pyridoxal 5'-phosphate is bound at residue 240–243; sequence DEVQ. An N6-(pyridoxal phosphate)lysine modification is found at lysine 269. Residue serine 296 participates in N(2)-acetyl-L-ornithine binding. Pyridoxal 5'-phosphate is bound at residue threonine 297.

The protein belongs to the class-III pyridoxal-phosphate-dependent aminotransferase family. ArgD subfamily. In terms of assembly, homodimer. The cofactor is pyridoxal 5'-phosphate.

Its subcellular location is the cytoplasm. It carries out the reaction N(2)-acetyl-L-ornithine + 2-oxoglutarate = N-acetyl-L-glutamate 5-semialdehyde + L-glutamate. It functions in the pathway amino-acid biosynthesis; L-arginine biosynthesis; N(2)-acetyl-L-ornithine from L-glutamate: step 4/4. The polypeptide is Acetylornithine aminotransferase (Prochlorococcus marinus (strain SARG / CCMP1375 / SS120)).